The chain runs to 547 residues: Phosphoethanolamine transferase EptA (547 aa).

Over 1-9 (MLKRLLKRP) the chain is Cytoplasmic. Residues 10–30 (SLNLLAWLLLAAFYISICLNI) form a helical membrane-spanning segment. The Periplasmic segment spans residues 31 to 47 (AFFKQVLQALPLDSLHN). A helical transmembrane segment spans residues 48 to 68 (VLVFLSMPVVAFSVINIVLTL). Residues 69-79 (SSFLWLNRPLA) are Cytoplasmic-facing. The chain crosses the membrane as a helical span at residues 80–100 (CLFILVGAAAQYFIMTYGIVI). The Periplasmic segment spans residues 101–123 (DRSMIANIIDTTPAESYALMTPQ). The helical transmembrane segment at 124 to 144 (MLLTLGFSGVLAALIACWIKI) threads the bilayer. Residues 145–154 (KPATSRLRSV) lie on the Cytoplasmic side of the membrane. The helical transmembrane segment at 155 to 175 (LFRGANILVSVLLILLVAALF) threads the bilayer. At 176 to 547 (YKDYASLFRN…ILQTCRRVSE (372 aa)) the chain is on the periplasmic side.

The protein belongs to the phosphoethanolamine transferase family. EptA subfamily. In terms of assembly, has been isolated as a 91 kDa complex containing ZipA-EptA and an unidentified 24 kDa protein.

It is found in the cell inner membrane. Its function is as follows. Catalyzes the addition of a phosphoethanolamine moiety to the lipid A. The phosphoethanolamine modification is required for resistance to polymyxin. This Escherichia coli (strain K12) protein is Phosphoethanolamine transferase EptA (eptA).